The sequence spans 257 residues: Photosystem I chlorophyll a/b-binding protein 2, chloroplastic (257 aa).

Residues 1–43 (MASSLCASSAIAAISSPSFLGGKKLRLKKKLTVPAVSRPDASV) constitute a chloroplast transit peptide. Tryptophan 55 provides a ligand contact to chlorophyll b. 3 residues coordinate chlorophyll a: phenylalanine 75, serine 81, and glutamate 94. Arginine 99 provides a ligand contact to chlorophyll b. 2 helical membrane-spanning segments follow: residues 100–120 (WAML…IGIL) and 133–153 (YFTD…WAEG). Residues glutamate 152 and arginine 155 each contribute to the chlorophyll b site. Positions 208, 209, 212, 214, 226, and 241 each coordinate chlorophyll a. The chain crosses the membrane as a helical span at residues 215 to 235 (LAMLAVMGAWFQHIYTGTGPI).

It belongs to the light-harvesting chlorophyll a/b-binding (LHC) protein family. The LHC complex consists of chlorophyll a-b binding proteins. Red-emitting heterodimers with LHCA3 and LHCA5. Binds to carotenoids. Binds at least 14 chlorophylls (8 Chl-a and 6 Chl-b) and carotenoids such as lutein and neoxanthin. serves as cofactor. Photoregulated by reversible phosphorylation of its threonine residues.

Its subcellular location is the plastid. The protein localises to the chloroplast thylakoid membrane. Functionally, the light-harvesting complex (LHC) functions as a light receptor, it captures and delivers excitation energy to photosystems with which it is closely associated, here photosystem I. The sequence is that of Photosystem I chlorophyll a/b-binding protein 2, chloroplastic from Arabidopsis thaliana (Mouse-ear cress).